The primary structure comprises 929 residues: MEPWDPPQLPPVRHSHAAGSGRAEGRHGTPPPWRPIISGPLPRPGSWDPGRDLHRPASQAESYESGHAFRAYSRQGYEDPHWQYPGAAYRDNHAYQSHQWQPTAWQGNRDVTQVKPHGKSTTYRDQHYYRGYHPNLAASPLGQDRSQTYDAYKEGSRRSWAGVSNLGEASGQPQQPSLLQQYRESGLSSSGYELSQYIRDGAEPNDTAFLGGWSPVQGGGPLESAVMAPHKFLQPHVPVCLGAGGQLVLVCPHRPTEGQLPLVELHSLEVILQGTTDQEELQAFPGPLAREDLHKVDVMTFCQQKIASSCDLSTQRGRDSALLWKLLVLLCRQNGSMVGSDVAELLMQDCRQQERYKRQEPAVGPVSLADEEWRQLGTLDLITGEVPPVVETQAQIVEKFTKLLYYGRKKDALVWAMRNQLWGHALFLSSKMDPRTYSWVLSGFTSTLATNDPLQTFFQLMSGRIPQAAQSCGDAKWGDWRPHLAVLLSNKVGDMELNHRAIVTMGDTLAGKGAVEAAHFCYLMADIPFGYFGVKADRMALLGSSHRQAFTQFATKEAIQRMEIFEYCQQLRHPTSFLLPFQVYKLLYASRLADHGLPAQALLYCEQIATVLLQQDPTSHPVLAQQLTKLAERLKLCDPLLLLEMPEQDPVLEPQWLLQLRTYCQHCQVQDDLAPEVALTQPEPWDTTATPGREMVHEQPHSDGPHDEQWHQPPVPLQGPDPHQDVSIPPLEVAVLGVGPISQEELCTEPSLQAVPTAGDAEEPQDAHGVQQPVLAELQELSTRARSASESSTASLEEDSQTSSDSPAEELEGTSEDKSFGFRWFGWFRSKPQKETSPKATTSGSPTPGLQDRRSPSPPGAVPSAQPPASPSPYRNPVSIDMKGPWDADGHEPLPGMVPLFNPAQVSQLAAARPTQPRLLSQRRYPNPL.

The segment covering 1-10 (MEPWDPPQLP) has biased composition (pro residues). The interval 1–64 (MEPWDPPQLP…RPASQAESYE (64 aa)) is disordered. A central conserved domain (CCD); required for localization to endoplasmic reticulum exit sites region spans residues 228-669 (APHKFLQPHV…LRTYCQHCQV (442 aa)). Disordered regions lie at residues 675–727 (PEVA…QDVS) and 781–929 (LSTR…PNPL). Over residues 694-710 (EMVHEQPHSDGPHDEQW) the composition is skewed to basic and acidic residues. Over residues 781 to 795 (LSTRARSASESSTAS) the composition is skewed to low complexity. The span at 838–848 (PKATTSGSPTP) shows a compositional bias: polar residues. Residues 856–871 (PSPPGAVPSAQPPASP) are compositionally biased toward pro residues.

It belongs to the SEC16 family. As to quaternary structure, SEC16A and SEC16B are each present in multiple copies in a heteromeric complex.

The protein localises to the endoplasmic reticulum membrane. It localises to the golgi apparatus membrane. Plays a role in the organization of the endoplasmic reticulum exit sites (ERES), also known as transitional endoplasmic reticulum (tER). Required for secretory cargo traffic from the endoplasmic reticulum to the Golgi apparatus. Involved in peroxisome biogenesis. Regulates the transport of peroxisomal biogenesis factors PEX3 and PEX16 from the ER to peroxisomes. The sequence is that of Protein transport protein Sec16B (SEC16B) from Gallus gallus (Chicken).